The chain runs to 235 residues: Thymidylate kinase (235 aa).

Residue 10 to 17 (GINGVEKS) participates in ATP binding.

The protein belongs to the thymidylate kinase family.

It catalyses the reaction dTMP + ATP = dTDP + ADP. It participates in pyrimidine metabolism; dTTP biosynthesis. Catalyzes the conversion of dTMP to dTDP. This chain is Thymidylate kinase (TMK), found in African swine fever virus (isolate Pig/Kenya/KEN-50/1950) (ASFV).